We begin with the raw amino-acid sequence, 98 residues long: Cobalt transport protein CbiN (98 aa).

Helical transmembrane passes span 6 to 26 (VLMI…YSGL) and 68 to 88 (SLLF…FFGY).

Belongs to the CbiN family. Forms an energy-coupling factor (ECF) transporter complex composed of an ATP-binding protein (A component, CbiO), a transmembrane protein (T component, CbiQ) and 2 possible substrate-capture proteins (S components, CbiM and CbiN) of unknown stoichimetry.

It localises to the cell membrane. The protein operates within cofactor biosynthesis; adenosylcobalamin biosynthesis. In terms of biological role, part of the energy-coupling factor (ECF) transporter complex CbiMNOQ involved in cobalt import. The protein is Cobalt transport protein CbiN of Methanococcus maripaludis (strain DSM 14266 / JCM 13030 / NBRC 101832 / S2 / LL).